The primary structure comprises 122 residues: Large ribosomal subunit protein uL14 (122 aa).

The protein belongs to the universal ribosomal protein uL14 family. Part of the 50S ribosomal subunit. Forms a cluster with proteins L3 and L19. In the 70S ribosome, L14 and L19 interact and together make contacts with the 16S rRNA in bridges B5 and B8.

Functionally, binds to 23S rRNA. Forms part of two intersubunit bridges in the 70S ribosome. The chain is Large ribosomal subunit protein uL14 from Shewanella denitrificans (strain OS217 / ATCC BAA-1090 / DSM 15013).